Here is a 99-residue protein sequence, read N- to C-terminus: MPVEYYLWLASILFGIGLLGVLTKRNALILMMSVELMLNAANLTFLAFARRSGDVAGHAIAFFVIAVAAAEAAVGLAVVIAIYRSRGAINVDEVRVLSE.

A run of 3 helical transmembrane segments spans residues 2 to 22 (PVEY…LGVL), 28 to 48 (LILM…FLAF), and 60 to 80 (IAFF…AVVI).

This sequence belongs to the complex I subunit 4L family. NDH-1 is composed of 14 different subunits. Subunits NuoA, H, J, K, L, M, N constitute the membrane sector of the complex.

Its subcellular location is the cell inner membrane. It catalyses the reaction a quinone + NADH + 5 H(+)(in) = a quinol + NAD(+) + 4 H(+)(out). Its function is as follows. NDH-1 shuttles electrons from NADH, via FMN and iron-sulfur (Fe-S) centers, to quinones in the respiratory chain. The immediate electron acceptor for the enzyme in this species is believed to be ubiquinone. Couples the redox reaction to proton translocation (for every two electrons transferred, four hydrogen ions are translocated across the cytoplasmic membrane), and thus conserves the redox energy in a proton gradient. This Anaeromyxobacter dehalogenans (strain 2CP-C) protein is NADH-quinone oxidoreductase subunit K.